The chain runs to 356 residues: UDP-3-O-acylglucosamine N-acyltransferase (356 aa).

Catalysis depends on histidine 242, which acts as the Proton acceptor.

It belongs to the transferase hexapeptide repeat family. LpxD subfamily. In terms of assembly, homotrimer.

It catalyses the reaction a UDP-3-O-[(3R)-3-hydroxyacyl]-alpha-D-glucosamine + a (3R)-hydroxyacyl-[ACP] = a UDP-2-N,3-O-bis[(3R)-3-hydroxyacyl]-alpha-D-glucosamine + holo-[ACP] + H(+). It participates in bacterial outer membrane biogenesis; LPS lipid A biosynthesis. Catalyzes the N-acylation of UDP-3-O-acylglucosamine using 3-hydroxyacyl-ACP as the acyl donor. Is involved in the biosynthesis of lipid A, a phosphorylated glycolipid that anchors the lipopolysaccharide to the outer membrane of the cell. This chain is UDP-3-O-acylglucosamine N-acyltransferase, found in Acinetobacter baumannii (strain AB307-0294).